The primary structure comprises 90 residues: WAP four-disulfide core domain protein 12 (90 aa).

An N-terminal signal peptide occupies residues 1–23 (MGSSSFLVLMVSLALVTLVAVEG). The region spanning 27–74 (GIEKAGVCPADNVRCFKSDPPQCHTDQDCLGERKCCYLHCGFKCVIPV) is the WAP domain. Disulfide bonds link Cys-34–Cys-62, Cys-41–Cys-66, Cys-49–Cys-61, and Cys-55–Cys-70.

It localises to the secreted. Functionally, antibacterial protein. Putative acid-stable proteinase inhibitor. This is WAP four-disulfide core domain protein 12 (WFDC12) from Pongo abelii (Sumatran orangutan).